The sequence spans 264 residues: Forkhead box protein pes-1 (264 aa).

2 disordered regions span residues 15–36 (DLDNCSSLPPTPPKTASPGNSK) and 50–93 (DSST…PTKR). The segment covering 50–64 (DSSTSSSCSVSPASS) has biased composition (low complexity). The segment covering 70–89 (ESVGQQQSGRNSPVSSSTES) has biased composition (polar residues). Positions 93 to 186 (RPKYSYNALI…ISNNCGKLRR (94 aa)) form a DNA-binding region, fork-head.

It localises to the nucleus. It is found in the cytoplasm. Its function is as follows. Transcription factor. Plays a role in embryogenesis and later development, perhaps acting redundantly with forkhead protein fkh-2. This chain is Forkhead box protein pes-1, found in Caenorhabditis elegans.